A 274-amino-acid polypeptide reads, in one-letter code: Nitrogenase iron protein (274 aa).

Residue Gly8–Ser15 coordinates ATP. Position 94 (Cys94) interacts with [4Fe-4S] cluster. Arg97 carries the ADP-ribosylarginine; by dinitrogenase reductase ADP-ribosyltransferase modification. Cys131 contributes to the [4Fe-4S] cluster binding site.

The protein belongs to the NifH/BchL/ChlL family. As to quaternary structure, homodimer. The cofactor is [4Fe-4S] cluster. Post-translationally, the reversible ADP-ribosylation of Arg-97 inactivates the nitrogenase reductase and regulates nitrogenase activity.

It catalyses the reaction N2 + 8 reduced [2Fe-2S]-[ferredoxin] + 16 ATP + 16 H2O = H2 + 8 oxidized [2Fe-2S]-[ferredoxin] + 2 NH4(+) + 16 ADP + 16 phosphate + 6 H(+). Its function is as follows. The key enzymatic reactions in nitrogen fixation are catalyzed by the nitrogenase complex, which has 2 components: the iron protein and the molybdenum-iron protein. This Dehalococcoides mccartyi (strain ATCC BAA-2266 / KCTC 15142 / 195) (Dehalococcoides ethenogenes (strain 195)) protein is Nitrogenase iron protein.